Consider the following 179-residue polypeptide: Large ribosomal subunit protein uL5 (179 aa).

Belongs to the universal ribosomal protein uL5 family. As to quaternary structure, part of the 50S ribosomal subunit; part of the 5S rRNA/L5/L18/L25 subcomplex. Contacts the 5S rRNA and the P site tRNA. Forms a bridge to the 30S subunit in the 70S ribosome.

Its function is as follows. This is one of the proteins that bind and probably mediate the attachment of the 5S RNA into the large ribosomal subunit, where it forms part of the central protuberance. In the 70S ribosome it contacts protein S13 of the 30S subunit (bridge B1b), connecting the 2 subunits; this bridge is implicated in subunit movement. Contacts the P site tRNA; the 5S rRNA and some of its associated proteins might help stabilize positioning of ribosome-bound tRNAs. This is Large ribosomal subunit protein uL5 from Rickettsia peacockii (strain Rustic).